Consider the following 156-residue polypeptide: Arginine repressor (156 aa).

It belongs to the ArgR family.

It localises to the cytoplasm. It participates in amino-acid biosynthesis; L-arginine biosynthesis [regulation]. Regulates arginine biosynthesis genes. This Shewanella sp. (strain ANA-3) protein is Arginine repressor.